The primary structure comprises 227 residues: Cytochrome c oxidase subunit 2 (227 aa).

Residues 1–14 (MAHPFQTGLQDATS) lie on the Mitochondrial intermembrane side of the membrane. The chain crosses the membrane as a helical span at residues 15-45 (PIMEELLHFHDHTLMIVFLISSLVLYIISIM). At 46–59 (LTTKLTHTNTMDAQ) the chain is on the mitochondrial matrix side. Residues 60 to 87 (EVETVWTILPAIILIMIALPSLRILYMM) form a helical membrane-spanning segment. The Mitochondrial intermembrane segment spans residues 88 to 227 (DEINNPSLTV…YFEKWSASML (140 aa)). Cu cation is bound by residues His161, Cys196, Glu198, Cys200, His204, and Met207. A Mg(2+)-binding site is contributed by Glu198. Position 218 is a phosphotyrosine (Tyr218).

This sequence belongs to the cytochrome c oxidase subunit 2 family. In terms of assembly, component of the cytochrome c oxidase (complex IV, CIV), a multisubunit enzyme composed of 14 subunits. The complex is composed of a catalytic core of 3 subunits MT-CO1, MT-CO2 and MT-CO3, encoded in the mitochondrial DNA, and 11 supernumerary subunits COX4I, COX5A, COX5B, COX6A, COX6B, COX6C, COX7A, COX7B, COX7C, COX8 and NDUFA4, which are encoded in the nuclear genome. The complex exists as a monomer or a dimer and forms supercomplexes (SCs) in the inner mitochondrial membrane with NADH-ubiquinone oxidoreductase (complex I, CI) and ubiquinol-cytochrome c oxidoreductase (cytochrome b-c1 complex, complex III, CIII), resulting in different assemblies (supercomplex SCI(1)III(2)IV(1) and megacomplex MCI(2)III(2)IV(2)). Found in a complex with TMEM177, COA6, COX18, COX20, SCO1 and SCO2. Interacts with TMEM177 in a COX20-dependent manner. Interacts with COX20. Interacts with COX16. Requires Cu cation as cofactor.

The protein resides in the mitochondrion inner membrane. The catalysed reaction is 4 Fe(II)-[cytochrome c] + O2 + 8 H(+)(in) = 4 Fe(III)-[cytochrome c] + 2 H2O + 4 H(+)(out). Component of the cytochrome c oxidase, the last enzyme in the mitochondrial electron transport chain which drives oxidative phosphorylation. The respiratory chain contains 3 multisubunit complexes succinate dehydrogenase (complex II, CII), ubiquinol-cytochrome c oxidoreductase (cytochrome b-c1 complex, complex III, CIII) and cytochrome c oxidase (complex IV, CIV), that cooperate to transfer electrons derived from NADH and succinate to molecular oxygen, creating an electrochemical gradient over the inner membrane that drives transmembrane transport and the ATP synthase. Cytochrome c oxidase is the component of the respiratory chain that catalyzes the reduction of oxygen to water. Electrons originating from reduced cytochrome c in the intermembrane space (IMS) are transferred via the dinuclear copper A center (CU(A)) of subunit 2 and heme A of subunit 1 to the active site in subunit 1, a binuclear center (BNC) formed by heme A3 and copper B (CU(B)). The BNC reduces molecular oxygen to 2 water molecules using 4 electrons from cytochrome c in the IMS and 4 protons from the mitochondrial matrix. This is Cytochrome c oxidase subunit 2 (MT-CO2) from Ailuropoda melanoleuca (Giant panda).